Consider the following 587-residue polypeptide: Putative phagocytic receptor 1b (587 aa).

Positions 1 to 23 (MRLQILLIYLICIIVSSIVLVES) are cleaved as a signal peptide. Transmembrane regions (helical) follow at residues 223 to 243 (LSVMNSFFLVVLLTAFLAIMI), 294 to 314 (IGWQFISIVCGILALSLFGMF), 319 to 339 (GGNMYTAGIVLYALTSGISGY), 354 to 374 (AWNIVLTATLFVAPLFIVVIL), 390 to 410 (ILTMIEVITIWLFVGFPLTVV), 448 to 468 (ILIAGFLPFSAIYIELFYIFN), 480 to 500 (GILCLVFLILINVTVCITVAL), 524 to 544 (VVFIYMYSIYYYYYISHMYGL), and 556 to 576 (IVCFFFFILLGTVGFYSSLIF).

The protein belongs to the nonaspanin (TM9SF) (TC 9.A.2) family.

It is found in the membrane. In terms of biological role, involved in adhesion and phagocytosis of hydrophilic particles. The chain is Putative phagocytic receptor 1b (phg1b) from Dictyostelium discoideum (Social amoeba).